Reading from the N-terminus, the 684-residue chain is Methionine--tRNA ligase (684 aa).

The 'HIGH' region signature appears at 14–24 (PYANGAIHLGH). The Zn(2+) site is built by cysteine 145, cysteine 148, cysteine 158, and cysteine 161. The 'KMSKS' region signature appears at 330–334 (KMSKS). Position 333 (lysine 333) interacts with ATP. A tRNA-binding domain is found at 582 to 684 (DFAKLDLRVA…CGIRPGMQVK (103 aa)).

This sequence belongs to the class-I aminoacyl-tRNA synthetase family. MetG type 1 subfamily. As to quaternary structure, homodimer. Zn(2+) serves as cofactor.

The protein localises to the cytoplasm. It catalyses the reaction tRNA(Met) + L-methionine + ATP = L-methionyl-tRNA(Met) + AMP + diphosphate. Is required not only for elongation of protein synthesis but also for the initiation of all mRNA translation through initiator tRNA(fMet) aminoacylation. This Haemophilus ducreyi (strain 35000HP / ATCC 700724) protein is Methionine--tRNA ligase.